We begin with the raw amino-acid sequence, 221 residues long: Ribosomal RNA small subunit methyltransferase G (221 aa).

Residues Gly-78, Phe-83, and Arg-150 each coordinate S-adenosyl-L-methionine.

It belongs to the methyltransferase superfamily. RNA methyltransferase RsmG family.

Its subcellular location is the cytoplasm. Functionally, specifically methylates the N7 position of a guanine in 16S rRNA. This Bifidobacterium longum (strain DJO10A) protein is Ribosomal RNA small subunit methyltransferase G.